The chain runs to 247 residues: tRNA pseudouridine synthase A (247 aa).

Aspartate 52 serves as the catalytic Nucleophile. Position 113 (tyrosine 113) interacts with substrate.

Belongs to the tRNA pseudouridine synthase TruA family. As to quaternary structure, homodimer.

It catalyses the reaction uridine(38/39/40) in tRNA = pseudouridine(38/39/40) in tRNA. Formation of pseudouridine at positions 38, 39 and 40 in the anticodon stem and loop of transfer RNAs. The protein is tRNA pseudouridine synthase A of Rhizobium meliloti (strain 1021) (Ensifer meliloti).